The primary structure comprises 444 residues: Tubulin beta chain (444 aa).

The MREI motif signature appears at 1 to 4; sequence MREI. GTP-binding residues include Gln11, Glu69, Ser138, Gly142, Thr143, Gly144, Asn204, and Asn226. Glu69 contacts Mg(2+). The tract at residues 421–444 is disordered; sequence EYQQYQDATAEEEEDFNEEAEEEA. Positions 429 to 444 are enriched in acidic residues; it reads TAEEEEDFNEEAEEEA. Residue Glu438 is modified to 5-glutamyl polyglutamate.

The protein belongs to the tubulin family. Dimer of alpha and beta chains. A typical microtubule is a hollow water-filled tube with an outer diameter of 25 nm and an inner diameter of 15 nM. Alpha-beta heterodimers associate head-to-tail to form protofilaments running lengthwise along the microtubule wall with the beta-tubulin subunit facing the microtubule plus end conferring a structural polarity. Microtubules usually have 13 protofilaments but different protofilament numbers can be found in some organisms and specialized cells. It depends on Mg(2+) as a cofactor. In terms of processing, some glutamate residues at the C-terminus are polyglycylated, resulting in polyglycine chains on the gamma-carboxyl group. Glycylation is mainly limited to tubulin incorporated into axonemes (cilia and flagella) whereas glutamylation is prevalent in neuronal cells, centrioles, axonemes, and the mitotic spindle. Both modifications can coexist on the same protein on adjacent residues, and lowering polyglycylation levels increases polyglutamylation, and reciprocally. The precise function of polyglycylation is still unclear. Post-translationally, some glutamate residues at the C-terminus are polyglutamylated, resulting in polyglutamate chains on the gamma-carboxyl group. Polyglutamylation plays a key role in microtubule severing by spastin (SPAST). SPAST preferentially recognizes and acts on microtubules decorated with short polyglutamate tails: severing activity by SPAST increases as the number of glutamates per tubulin rises from one to eight, but decreases beyond this glutamylation threshold.

The protein localises to the cytoplasm. The protein resides in the cytoskeleton. Functionally, tubulin is the major constituent of microtubules, a cylinder consisting of laterally associated linear protofilaments composed of alpha- and beta-tubulin heterodimers. Microtubules grow by the addition of GTP-tubulin dimers to the microtubule end, where a stabilizing cap forms. Below the cap, tubulin dimers are in GDP-bound state, owing to GTPase activity of alpha-tubulin. The chain is Tubulin beta chain (tubb) from Xenopus laevis (African clawed frog).